A 352-amino-acid polypeptide reads, in one-letter code: Phenylalanine--tRNA ligase alpha subunit (352 aa).

Glutamate 258 is a Mg(2+) binding site.

It belongs to the class-II aminoacyl-tRNA synthetase family. Phe-tRNA synthetase alpha subunit type 1 subfamily. In terms of assembly, tetramer of two alpha and two beta subunits. Mg(2+) serves as cofactor.

Its subcellular location is the cytoplasm. The catalysed reaction is tRNA(Phe) + L-phenylalanine + ATP = L-phenylalanyl-tRNA(Phe) + AMP + diphosphate + H(+). In Staphylococcus aureus (strain NCTC 8325 / PS 47), this protein is Phenylalanine--tRNA ligase alpha subunit.